A 441-amino-acid polypeptide reads, in one-letter code: Chromosomal replication initiator protein DnaA (441 aa).

Positions 1-80 (MQNDVLARWE…MHQEISLQFI (80 aa)) are domain I, interacts with DnaA modulators. The interval 80-102 (ILAGQEVDQPKPKERSSEETYIN) is domain II. Residues 103-320 (ILNPRYTFDT…GALIRVSAFS (218 aa)) are domain III, AAA+ region. Glycine 147, glycine 149, lysine 150, and threonine 151 together coordinate ATP. Residues 321–441 (SLEQRDATPQ…IKELKKRIGE (121 aa)) are domain IV, binds dsDNA.

It belongs to the DnaA family. As to quaternary structure, oligomerizes as a right-handed, spiral filament on DNA at oriC.

The protein resides in the cytoplasm. Functionally, plays an essential role in the initiation and regulation of chromosomal replication. ATP-DnaA binds to the origin of replication (oriC) to initiate formation of the DNA replication initiation complex once per cell cycle. Binds the DnaA box (a 9 base pair repeat at the origin) and separates the double-stranded (ds)DNA. Forms a right-handed helical filament on oriC DNA; dsDNA binds to the exterior of the filament while single-stranded (ss)DNA is stabiized in the filament's interior. The ATP-DnaA-oriC complex binds and stabilizes one strand of the AT-rich DNA unwinding element (DUE), permitting loading of DNA polymerase. After initiation quickly degrades to an ADP-DnaA complex that is not apt for DNA replication. Binds acidic phospholipids. The chain is Chromosomal replication initiator protein DnaA from Desulforamulus reducens (strain ATCC BAA-1160 / DSM 100696 / MI-1) (Desulfotomaculum reducens).